Reading from the N-terminus, the 225-residue chain is Probable GTP-binding protein EngB (225 aa).

The 185-residue stretch at 40-224 (GPPEVAFAGR…RAAIVHAVTA (185 aa)) folds into the EngB-type G domain. GTP is bound by residues 48–55 (GRSNVGKS), 75–79 (GRTQE), 102–105 (DMPG), 169–172 (TKAD), and 203–205 (TSS). Mg(2+) contacts are provided by S55 and T77.

It belongs to the TRAFAC class TrmE-Era-EngA-EngB-Septin-like GTPase superfamily. EngB GTPase family. The cofactor is Mg(2+).

Necessary for normal cell division and for the maintenance of normal septation. This chain is Probable GTP-binding protein EngB, found in Chelativorans sp. (strain BNC1).